The following is a 156-amino-acid chain: Small ribosomal subunit protein uS7 (156 aa).

The protein belongs to the universal ribosomal protein uS7 family. Part of the 30S ribosomal subunit. Contacts proteins S9 and S11.

Functionally, one of the primary rRNA binding proteins, it binds directly to 16S rRNA where it nucleates assembly of the head domain of the 30S subunit. Is located at the subunit interface close to the decoding center, probably blocks exit of the E-site tRNA. The sequence is that of Small ribosomal subunit protein uS7 from Alkaliphilus oremlandii (strain OhILAs) (Clostridium oremlandii (strain OhILAs)).